The sequence spans 28 residues: Conotoxin Cal6.43b (28 aa).

3 cysteine pairs are disulfide-bonded: Cys-3–Cys-13, Cys-7–Cys-19, and Cys-12–Cys-25.

As to expression, expressed by the venom duct.

It is found in the secreted. In terms of biological role, probable neurotoxin with unknown target. Possibly targets ion channels. The protein is Conotoxin Cal6.43b of Californiconus californicus (California cone).